Reading from the N-terminus, the 353-residue chain is 3-dehydroquinate synthase (353 aa).

NAD(+) contacts are provided by residues 61–66 (DGEEAK), 119–120 (TT), Lys132, and Lys141. Positions 174, 238, and 254 each coordinate Zn(2+).

The protein belongs to the sugar phosphate cyclases superfamily. Dehydroquinate synthase family. It depends on Co(2+) as a cofactor. Requires Zn(2+) as cofactor. NAD(+) serves as cofactor.

Its subcellular location is the cytoplasm. It catalyses the reaction 7-phospho-2-dehydro-3-deoxy-D-arabino-heptonate = 3-dehydroquinate + phosphate. Its pathway is metabolic intermediate biosynthesis; chorismate biosynthesis; chorismate from D-erythrose 4-phosphate and phosphoenolpyruvate: step 2/7. Its function is as follows. Catalyzes the conversion of 3-deoxy-D-arabino-heptulosonate 7-phosphate (DAHP) to dehydroquinate (DHQ). The sequence is that of 3-dehydroquinate synthase from Sulfolobus acidocaldarius (strain ATCC 33909 / DSM 639 / JCM 8929 / NBRC 15157 / NCIMB 11770).